A 438-amino-acid chain; its full sequence is Adenylosuccinate synthetase (438 aa).

GTP-binding positions include 13 to 19 (GDEGKGK) and 41 to 43 (GHT). The active-site Proton acceptor is the Asp14. Mg(2+) is bound by residues Asp14 and Gly41. IMP contacts are provided by residues 14-17 (DEGK), 39-42 (NAGH), Thr136, Arg150, Gln231, Thr246, and Arg310. His42 (proton donor) is an active-site residue. 306–312 (STTGRRR) contributes to the substrate binding site. GTP is bound by residues Arg312, 338-340 (KID), and 421-423 (STG).

Belongs to the adenylosuccinate synthetase family. Homodimer. The cofactor is Mg(2+).

The protein localises to the cytoplasm. The catalysed reaction is IMP + L-aspartate + GTP = N(6)-(1,2-dicarboxyethyl)-AMP + GDP + phosphate + 2 H(+). It participates in purine metabolism; AMP biosynthesis via de novo pathway; AMP from IMP: step 1/2. Its function is as follows. Plays an important role in the de novo pathway of purine nucleotide biosynthesis. Catalyzes the first committed step in the biosynthesis of AMP from IMP. This Blochmanniella floridana protein is Adenylosuccinate synthetase.